The chain runs to 258 residues: F-box/SPRY domain-containing protein 1 (258 aa).

Positions 6–54 (TEYAPDIPDNVLELIFSYLKLQDLRNCSLVCKSWNRFLNDENNEVWRAQ) constitute an F-box domain. A B30.2/SPRY domain is found at 64–256 (FKTDLLSVVP…ISMVYLGPPL (193 aa)).

Belongs to the FBXO45/Fsn family. Component of an E3 ubiquitin ligase complex composed of hiw and Fsn.

It localises to the synapse. It functions in the pathway protein modification; protein ubiquitination. Its function is as follows. Required in the presynaptic motoneuron to down-regulate the levels of wnd and restrain synaptic terminal growth at the neuromuscular junction (NMJ). This Aedes aegypti (Yellowfever mosquito) protein is F-box/SPRY domain-containing protein 1.